Consider the following 236-residue polypeptide: MAATLLDVCAVVPAAGFGRRMQTECPKQYLSIGNKTILEHSVHALLAHPRVTRVVIAISPGDHRFAQLPLANHPQITVVDGGNERADSVLAGLQAVAKAQWVLVHDAARPCLHQDDLARLLAISENSRVGGILASPVRDTMKRGEPGKNAIAHTVERADLWHALTPQFFPRELLYDCLTRALNEGATITDEASALEYCGFHPALVEGRADNIKVTRPEDLALAEFYLTRTIHQEKA.

The protein belongs to the IspD/TarI cytidylyltransferase family. IspD subfamily. As to quaternary structure, homodimer.

It catalyses the reaction 2-C-methyl-D-erythritol 4-phosphate + CTP + H(+) = 4-CDP-2-C-methyl-D-erythritol + diphosphate. The protein operates within isoprenoid biosynthesis; isopentenyl diphosphate biosynthesis via DXP pathway; isopentenyl diphosphate from 1-deoxy-D-xylulose 5-phosphate: step 2/6. Catalyzes the formation of 4-diphosphocytidyl-2-C-methyl-D-erythritol from CTP and 2-C-methyl-D-erythritol 4-phosphate (MEP). The polypeptide is 2-C-methyl-D-erythritol 4-phosphate cytidylyltransferase (Salmonella typhimurium (strain LT2 / SGSC1412 / ATCC 700720)).